Here is a 1020-residue protein sequence, read N- to C-terminus: MSTFESLLARNEGLGQLFYQQMLEDPDAIAIVDGDYSLTYASLHAQATHLAQRLDQNDFVHEEPVGIVVQHGILDAVAQVAIIYAGGTCVTLDPALPNQQIERRLNRLRARYILVDTPNKSRGLPFSQIEVEDLPISTELIPTDSPYPVNLSLEHRSHLIHTSGTTSESKAVQIVGRSIVHVANYAPFEPVVKTDVVAHGNSTSFDVALFDIWAPLVQGASIAVLSKATLLDLSAFEAAIDRYKISVMAITAPLVNLAATTRPGMFSSMRVVLMGGEAVNIPAMRKIFEAGPPVHMVNAYGPTECCVYCLARKITLEDLDTGAVSIGKAIGNNIATVCDEMGKPVPDGEEGELLVGGPGVSPGYVNLPGKNAASFIEVPDLVDANGTPYHMYRTGDLVKRRPDGQYDFVGRFDHQVKIRGYRVELGAIETVLMDTGYFSEGVVMKVDSKAEGAGSALVAFAVLAPTAPPSAVTDATAALTAALPHYMIPNIHIVESIPLTNHAKVDRKQLADWCLQRQEKNMCAMQDKVPSEGASTRDQLGALWATILATPVREYSDNDDFFGLGGTSLQASLLISLIRRTFNTEVSLLALYDNSTLGQLAHIVDRNQGGALATVQNLREMWIADTMIGDALETPVGPVVDWRRDTEGRVFLTGATGFVGAFLLSDMLKMPGIHQVGCLVRAPDEATGVRRLRHALEKYNLWREEYLPKLLPLCGKLEDPWLGLGEQRFREIADWASVIFHLGALVNYTQPYSWHRPANIEGTVNVVRLACTGRSKALHYCSSISCFGPTGIINGTKVVHEDGALMPHLNALPYDHGYAQSQWVAEELLRRLIHRRFPIAVYRPGFITGHSETGACNPDDFFSRLIRACSSIGCYPGLPNQRKEFVPIDYVTSTMIHIASSSLSLGHAFHIVPPTREESPEMNDTMSLIGELTGTSIQPVSYREWIEQLSSTKDLSLQPLLPMLAEVVIDGMTRWEMYENMPTYENTNTLRALASCPDLPKFPMVDEALLRKYLDYLADH.

Positions Gln21–Arg419 are adenylation (A) domain. The Carrier domain maps to Gln526–Gln608. Residue Ser568 is modified to O-(pantetheine 4'-phosphoryl)serine. Positions Leu652 to Thr894 are short-chain dehydrogenase/reductase (R) domain.

This sequence belongs to the NRP synthetase family.

It participates in secondary metabolite biosynthesis. Functionally, non-canonical nonribosomal peptide synthetase; part of the gene cluster that mediates the biosynthesis of hancockiamides, an unusual new family of N-cinnamoylated piperazines. The NRPS hkm10 and the NmrA-like reductase hkm9 are proposed to convert two molecules of L-Phe to the intermediary piperazine called xenocockiamide A. Xenocockiamide A is then converted to hancockiamide D via a series of hydroxylations and O-methylations. The tyrosinase hkm6 may catalyze an aromatic hydroxylation, then the 2-oxoglutarate-dependent Fe(II) dioxygenase hkm4 and the FAD-dependent phenol hydroxylase hkm7 may catalyze consecutive hydroxylations to install 2 more hydroxy groups, and the methyltransferase hkm8 probably catalyzes two methylations using 2 molecules of S-adenosyl-L-methionine (SAM). The NRPS hkm11 activates and transfers trans-cinnamate supplied by the PAL hkm12 to hancockiamide D and produces hancockiamide A. NRPS Hkm11 has the flexibility to tolerate the bulky hancockiamide G as a substrate and the absence of the acetyl-transferase hkm3 opens up the opportunity for hkm11 to introduce a second N-cinnamoyl moiety. The cytochrome P450 monooxygenase hkm5 catalyzes the methylenedioxy bridge formation, converting hancockiamide A into hancockiamide G. Hkm5 can also convert hancockiamide B into hancockiamide C, and hancockiamide D into hancockiamide H. The N-acetyltransferase hkm3 finally transfers an acetyl group to 1-N of piperazine, converting hancockiamide A into hancockiamide B and hancockiamide G into hancockiamide C. This is Non-canonical nonribosomal peptide synthetase hkm10 from Aspergillus hancockii.